Consider the following 261-residue polypeptide: 4-phosphopantoate--beta-alanine ligase (261 aa).

ATP-binding positions include R17, R39, 181–182 (DL), 187–188 (RS), and 199–200 (NI).

This sequence belongs to the archaeal phosphopantothenate synthetase family. In terms of assembly, homodimer.

It catalyses the reaction (R)-4-phosphopantoate + beta-alanine + ATP = (R)-4'-phosphopantothenate + AMP + diphosphate + H(+). The protein operates within cofactor biosynthesis; coenzyme A biosynthesis. In terms of biological role, catalyzes the condensation of (R)-4-phosphopantoate and beta-alanine to 4'-phosphopantothenate in the CoA biosynthesis pathway. The sequence is that of 4-phosphopantoate--beta-alanine ligase from Thermococcus onnurineus (strain NA1).